The sequence spans 360 residues: Mannonate dehydratase (360 aa).

It belongs to the mannonate dehydratase family. Fe(2+) serves as cofactor. It depends on Mn(2+) as a cofactor.

The enzyme catalyses D-mannonate = 2-dehydro-3-deoxy-D-gluconate + H2O. The protein operates within carbohydrate metabolism; pentose and glucuronate interconversion. In terms of biological role, catalyzes the dehydration of D-mannonate. This chain is Mannonate dehydratase, found in Thermotoga sp. (strain RQ2).